A 76-amino-acid polypeptide reads, in one-letter code: Sec-independent protein translocase protein TatA (76 aa).

The helical transmembrane segment at 1-21 threads the bilayer; sequence MGSFSIWHWLIVLVIVMLVFG. Composition is skewed to basic and acidic residues over residues 41 to 50 and 57 to 76; these read DGMKDGEDKG and KELR…SRQQ. Residues 41 to 76 are disordered; it reads DGMKDGEDKGAQPAASKELRDSTTIDVDAKEKSRQQ.

The protein belongs to the TatA/E family. The Tat system comprises two distinct complexes: a TatABC complex, containing multiple copies of TatA, TatB and TatC subunits, and a separate TatA complex, containing only TatA subunits. Substrates initially bind to the TatABC complex, which probably triggers association of the separate TatA complex to form the active translocon.

Its subcellular location is the cell inner membrane. Part of the twin-arginine translocation (Tat) system that transports large folded proteins containing a characteristic twin-arginine motif in their signal peptide across membranes. TatA could form the protein-conducting channel of the Tat system. The sequence is that of Sec-independent protein translocase protein TatA from Cupriavidus taiwanensis (strain DSM 17343 / BCRC 17206 / CCUG 44338 / CIP 107171 / LMG 19424 / R1) (Ralstonia taiwanensis (strain LMG 19424)).